A 347-amino-acid chain; its full sequence is Haptoglobin (347 aa).

Residues 1–18 form the signal peptide; sequence MRALGAVVTLLLWGQLFA. In terms of domain architecture, Sushi spans 31–88; that stretch reads DSCPKPPEIANGYVEHLVRYRCRQFYRLRAEGDGVYTLNDEKQWVNTVAGEKLPECEA. 4 disulfide bridges follow: cysteine 52/cysteine 86, cysteine 90/cysteine 207, cysteine 250/cysteine 281, and cysteine 292/cysteine 322. Residues 103–345 form the Peptidase S1 domain; the sequence is IIGGSMDAKG…LKDWVQETMA (243 aa). N-linked (GlcNAc...) asparagine glycans are attached at residues asparagine 148, asparagine 182, asparagine 256, and asparagine 264. The segment at 259–264 is interaction with CD163; sequence VPEKKN.

Belongs to the peptidase S1 family. In terms of assembly, tetramer of two alpha and two beta chains; disulfide-linked. The hemoglobin/haptoglobin complex is composed of a haptoglobin dimer bound to two hemoglobin alpha-beta dimers. Interacts with CD163. Interacts with ERGIC3. In terms of tissue distribution, expressed by the liver and secreted in plasma.

The protein localises to the secreted. Functionally, as a result of hemolysis, hemoglobin is found to accumulate in the kidney and is secreted in the urine. Haptoglobin captures, and combines with free plasma hemoglobin to allow hepatic recycling of heme iron and to prevent kidney damage. Haptoglobin also acts as an antioxidant, has antibacterial activity and plays a role in modulating many aspects of the acute phase response. Hemoglobin/haptoglobin complexes are rapidly cleared by the macrophage CD163 scavenger receptor expressed on the surface of liver Kupfer cells through an endocytic lysosomal degradation pathway. This Mus musculus (Mouse) protein is Haptoglobin (Hp).